An 803-amino-acid polypeptide reads, in one-letter code: Translation initiation factor IF-2 (803 aa).

Residues 65 to 75 (PDKVEEKKEHT) show a composition bias toward basic and acidic residues. The disordered stretch occupies residues 65–186 (PDKVEEKKEH…PKSRKSKTLK (122 aa)). A compositionally biased stretch (basic residues) spans 175–185 (NKPKSRKSKTL). In terms of domain architecture, tr-type G spans 300–468 (IRPPVVTIMG…ILLTADAALE (169 aa)). The G1 stretch occupies residues 309-316 (GHVDHGKT). 309–316 (GHVDHGKT) contacts GTP. The tract at residues 334–338 (GITQH) is G2. The interval 355-358 (DTPG) is G3. Residues 355 to 359 (DTPGH) and 409 to 412 (NKID) each bind GTP. The tract at residues 409-412 (NKID) is G4. The tract at residues 445-447 (SAK) is G5.

The protein belongs to the TRAFAC class translation factor GTPase superfamily. Classic translation factor GTPase family. IF-2 subfamily.

Its subcellular location is the cytoplasm. One of the essential components for the initiation of protein synthesis. Protects formylmethionyl-tRNA from spontaneous hydrolysis and promotes its binding to the 30S ribosomal subunits. Also involved in the hydrolysis of GTP during the formation of the 70S ribosomal complex. The protein is Translation initiation factor IF-2 of Tropheryma whipplei (strain Twist) (Whipple's bacillus).